The chain runs to 433 residues: Histidinol dehydrogenase (433 aa).

NAD(+) is bound by residues Tyr-129, Gln-191, and Asn-214. Substrate is bound by residues Ser-237, Gln-259, and His-262. Gln-259 and His-262 together coordinate Zn(2+). Residues Glu-326 and His-327 each act as proton acceptor in the active site. The substrate site is built by His-327, Asp-360, Glu-414, and His-419. Asp-360 contributes to the Zn(2+) binding site. His-419 contacts Zn(2+).

Belongs to the histidinol dehydrogenase family. Zn(2+) serves as cofactor.

It carries out the reaction L-histidinol + 2 NAD(+) + H2O = L-histidine + 2 NADH + 3 H(+). It participates in amino-acid biosynthesis; L-histidine biosynthesis; L-histidine from 5-phospho-alpha-D-ribose 1-diphosphate: step 9/9. Catalyzes the sequential NAD-dependent oxidations of L-histidinol to L-histidinaldehyde and then to L-histidine. The protein is Histidinol dehydrogenase of Methanosarcina mazei (strain ATCC BAA-159 / DSM 3647 / Goe1 / Go1 / JCM 11833 / OCM 88) (Methanosarcina frisia).